We begin with the raw amino-acid sequence, 152 residues long: Ribosomal RNA large subunit methyltransferase H (152 aa).

S-adenosyl-L-methionine contacts are provided by residues leucine 68, glycine 100, and 119–124 (LGVMTW).

It belongs to the RNA methyltransferase RlmH family. As to quaternary structure, homodimer.

The protein localises to the cytoplasm. It catalyses the reaction pseudouridine(1915) in 23S rRNA + S-adenosyl-L-methionine = N(3)-methylpseudouridine(1915) in 23S rRNA + S-adenosyl-L-homocysteine + H(+). In terms of biological role, specifically methylates the pseudouridine at position 1915 (m3Psi1915) in 23S rRNA. This chain is Ribosomal RNA large subunit methyltransferase H, found in Rhodospirillum rubrum (strain ATCC 11170 / ATH 1.1.1 / DSM 467 / LMG 4362 / NCIMB 8255 / S1).